Consider the following 302-residue polypeptide: Bifunctional protein FolD (302 aa).

NADP(+) contacts are provided by residues 168-170 (GRS), T197, and V238.

The protein belongs to the tetrahydrofolate dehydrogenase/cyclohydrolase family. In terms of assembly, homodimer.

It carries out the reaction (6R)-5,10-methylene-5,6,7,8-tetrahydrofolate + NADP(+) = (6R)-5,10-methenyltetrahydrofolate + NADPH. The catalysed reaction is (6R)-5,10-methenyltetrahydrofolate + H2O = (6R)-10-formyltetrahydrofolate + H(+). Its pathway is one-carbon metabolism; tetrahydrofolate interconversion. Functionally, catalyzes the oxidation of 5,10-methylenetetrahydrofolate to 5,10-methenyltetrahydrofolate and then the hydrolysis of 5,10-methenyltetrahydrofolate to 10-formyltetrahydrofolate. The polypeptide is Bifunctional protein FolD (Desulfatibacillum aliphaticivorans).